Reading from the N-terminus, the 67-residue chain is Beta-defensin 123 (67 aa).

Positions 1–20 are cleaved as a signal peptide; it reads MKLLLLTLTVLLLLSQLTPG. 3 disulfides stabilise this stretch: cysteine 25–cysteine 52, cysteine 32–cysteine 46, and cysteine 36–cysteine 53.

Belongs to the beta-defensin family.

The protein localises to the secreted. Functionally, has antibacterial activity. The polypeptide is Beta-defensin 123 (DEFB123) (Pongo pygmaeus (Bornean orangutan)).